We begin with the raw amino-acid sequence, 445 residues long: Anthranilate N-benzoyltransferase protein 1 (445 aa).

Active-site proton acceptor residues include His164 and Asp392.

Belongs to the plant acyltransferase family. N-terminus is blocked.

The enzyme catalyses anthranilate + benzoyl-CoA = N-benzoylanthranilate + CoA. It functions in the pathway phytoalexin biosynthesis; methoxydianthramide B biosynthesis. Catalyzes the formation of N-benzoylanthranilate, in the course of methoxydianthramide B, a phytoalexin. Phytoalexins are produced in response to infection by parasites, and are essential for the expression of disease resistance. The chain is Anthranilate N-benzoyltransferase protein 1 (HCBT1) from Dianthus caryophyllus (Carnation).